Here is a 148-residue protein sequence, read N- to C-terminus: Gas vesicle protein J (148 aa).

Disordered stretches follow at residues 1-21 (MTTT…VIPT) and 118-148 (EETT…QLEA). Positions 136–148 (VNSQEGDNSQLEA) are enriched in polar residues.

This sequence belongs to the gas vesicle GvpA family. Interacts with GvpA.

The protein resides in the gas vesicle. A minor component of the gas vesicle, might be involved in nucleating gas vesicle formation. Gas vesicles (GV) are hollow, gas filled proteinaceous nanostructures. During planktonic growth they allow positioning of the organism at a favorable depth for light or nutrient acquisition. Its function is as follows. Cluster expression in E.coli (gvpA1-gvpA2-gvpC-gvpN-gvpJ-gvpK-gvpF-gvpG-gvpV-gvpW) allows cells to float and produces irregularly shaped gas vesicles. This is Gas vesicle protein J from Nostoc sp. (strain PCC 7120 / SAG 25.82 / UTEX 2576).